The primary structure comprises 224 residues: Ankyrin repeat domain-containing protein 45 (224 aa).

ANK repeat units follow at residues V46–E76 and R80–A109.

Widely expressed.

It localises to the cytoplasm. The protein resides in the midbody. It is found in the midbody ring. The protein localises to the cleavage furrow. May play a role during cell division. The protein is Ankyrin repeat domain-containing protein 45 of Danio rerio (Zebrafish).